Here is a 374-residue protein sequence, read N- to C-terminus: Tryptophan--tRNA ligase (374 aa).

Residues 71–79 carry the 'HIGH' region motif; that stretch reads PSGRMHLGH. The short motif at 247–251 is the 'KMSKS' region element; that stretch reads KMSSS.

Belongs to the class-I aminoacyl-tRNA synthetase family.

It is found in the cytoplasm. It carries out the reaction tRNA(Trp) + L-tryptophan + ATP = L-tryptophyl-tRNA(Trp) + AMP + diphosphate + H(+). This chain is Tryptophan--tRNA ligase, found in Methanopyrus kandleri (strain AV19 / DSM 6324 / JCM 9639 / NBRC 100938).